The chain runs to 206 residues: Small ribosomal subunit protein uS7 (206 aa).

The span at 1-19 (MSAEDTPEADADAAEESEP) shows a compositional bias: acidic residues. Residues 1-25 (MSAEDTPEADADAAEESEPETARAK) are disordered. Ser-2 bears the N-acetylserine mark.

The protein belongs to the universal ribosomal protein uS7 family. In terms of assembly, part of the 30S ribosomal subunit.

Its function is as follows. One of the primary rRNA binding proteins, it binds directly to 16S rRNA where it nucleates assembly of the head domain of the 30S subunit. Is located at the subunit interface close to the decoding center. The protein is Small ribosomal subunit protein uS7 of Haloarcula marismortui (strain ATCC 43049 / DSM 3752 / JCM 8966 / VKM B-1809) (Halobacterium marismortui).